A 362-amino-acid chain; its full sequence is Tyrosine recombinase XerH (362 aa).

Positions 43–140 (ECLNELNQAC…ALLGLFSYID (98 aa)) constitute a Core-binding (CB) domain. A Tyr recombinase domain is found at 170–357 (KLPTHLNNEE…DKQRLEEAAS (188 aa)). Active-site residues include Arg213, Lys239, His309, Arg312, and His335. Tyr344 functions as the O-(3'-phospho-DNA)-tyrosine intermediate in the catalytic mechanism.

The protein belongs to the 'phage' integrase family. XerH subfamily.

The protein localises to the cytoplasm. Its activity is regulated as follows. FtsK is required for recombination. In terms of biological role, site-specific tyrosine recombinase, which acts by catalyzing the cutting and rejoining of the recombining DNA molecules. Involved in chromosome segregation. May contribute to chromosome decatenation. In Helicobacter pylori (strain ATCC 700392 / 26695) (Campylobacter pylori), this protein is Tyrosine recombinase XerH.